A 129-amino-acid chain; its full sequence is Phosphoribosyl-AMP cyclohydrolase (129 aa).

Asp-85 contacts Mg(2+). Cys-86 serves as a coordination point for Zn(2+). Residues Asp-87 and Asp-89 each contribute to the Mg(2+) site. The Zn(2+) site is built by Cys-102 and Cys-109.

It belongs to the PRA-CH family. As to quaternary structure, homodimer. Mg(2+) serves as cofactor. It depends on Zn(2+) as a cofactor.

It is found in the cytoplasm. The catalysed reaction is 1-(5-phospho-beta-D-ribosyl)-5'-AMP + H2O = 1-(5-phospho-beta-D-ribosyl)-5-[(5-phospho-beta-D-ribosylamino)methylideneamino]imidazole-4-carboxamide. The protein operates within amino-acid biosynthesis; L-histidine biosynthesis; L-histidine from 5-phospho-alpha-D-ribose 1-diphosphate: step 3/9. Catalyzes the hydrolysis of the adenine ring of phosphoribosyl-AMP. The sequence is that of Phosphoribosyl-AMP cyclohydrolase from Methanococcus maripaludis (strain C6 / ATCC BAA-1332).